Reading from the N-terminus, the 61-residue chain is Large ribosomal subunit protein bL32 (61 aa).

A compositionally biased stretch (basic residues) spans 1–16 (MAVPKKKTSKSRKNMR). Residues 1–20 (MAVPKKKTSKSRKNMRRAHD) are disordered.

Belongs to the bacterial ribosomal protein bL32 family.

The polypeptide is Large ribosomal subunit protein bL32 (Trichlorobacter lovleyi (strain ATCC BAA-1151 / DSM 17278 / SZ) (Geobacter lovleyi)).